A 319-amino-acid chain; its full sequence is Pre T-cell antigen receptor alpha (319 aa).

Residues 1 to 16 (MAESWLLLLLALGCPA) form the signal peptide. Over 17–160 (LPTEVTTLLR…LRGTRALVLR (144 aa)) the chain is Extracellular. Cysteines 58 and 118 form a disulfide. Residue Asn78 is glycosylated (N-linked (GlcNAc...) asparagine). The helical transmembrane segment at 161-181 (LGALRLLLFKLLLLDVLLTCG) threads the bilayer. The Cytoplasmic segment spans residues 182 to 319 (RLHAPPAARG…PPADPSFPGG (138 aa)). Low complexity predominate over residues 189–207 (ARGDPAGASGPGAPSLPAP). The interval 189-293 (ARGDPAGASG…VLRAWSSGPS (105 aa)) is disordered. Residues 260–271 (RRRRVHTRRPRR) are compositionally biased toward basic residues.

As to quaternary structure, heterodimer with TCRB; disulfide linked. This heterodimer assembles with CD3 proteins into a signaling-competent pre-T-cell receptor complex. Interacts with RHBDD1.

The protein localises to the membrane. It localises to the cell membrane. Component of the pre-T-cell receptor complex (composed of PTCRA, TCRB and the CD3 complex) that has a crucial role in early T-cell development, particularly alpha-beta T cell differentiation. In Bos taurus (Bovine), this protein is Pre T-cell antigen receptor alpha (PTCRA).